The primary structure comprises 141 residues: Nucleoside diphosphate kinase (141 aa).

ATP-binding residues include lysine 11, phenylalanine 59, arginine 87, threonine 93, arginine 104, and asparagine 114. The active-site Pros-phosphohistidine intermediate is histidine 117.

It belongs to the NDK family. Homotetramer. The cofactor is Mg(2+).

It localises to the cytoplasm. The enzyme catalyses a 2'-deoxyribonucleoside 5'-diphosphate + ATP = a 2'-deoxyribonucleoside 5'-triphosphate + ADP. It catalyses the reaction a ribonucleoside 5'-diphosphate + ATP = a ribonucleoside 5'-triphosphate + ADP. Its function is as follows. Major role in the synthesis of nucleoside triphosphates other than ATP. The ATP gamma phosphate is transferred to the NDP beta phosphate via a ping-pong mechanism, using a phosphorylated active-site intermediate. This is Nucleoside diphosphate kinase from Cupriavidus pinatubonensis (strain JMP 134 / LMG 1197) (Cupriavidus necator (strain JMP 134)).